The chain runs to 337 residues: uncharacterized protein (337 aa).

Residues 1 to 10 (MKLKINIRPN) lie on the Cytoplasmic side of the membrane. A helical transmembrane segment spans residues 11 to 31 (EIIFLICIVVIFSFSYTLTYF). Topologically, residues 32-100 (DSPIFKEHYI…LEKLFSFSDN (69 aa)) are extracellular. The chain crosses the membrane as a helical span at residues 101–121 (ILIVLIIVQVIVGFLIFLLSV). Topologically, residues 122–197 (EKLSKCNYQL…KILIIKKKRD (76 aa)) are cytoplasmic. The segment covering 148-167 (NNNNEDINNNNNNNNNNNNK) has biased composition (low complexity). A disordered region spans residues 148-179 (NNNNEDINNNNNNNNNNNNKNKNDERNNEEIE). Residues 198–218 (ILLAIIIFFLVLLGVLTIIYV) form a helical membrane-spanning segment. The Extracellular portion of the chain corresponds to 219–285 (SFIPLNIRKA…SWSLDSGLFN (67 aa)). Residues 286–306 (VKIVFFSTILIEFLTGCLILL) traverse the membrane as a helical segment. Topologically, residues 307 to 337 (MKFKKDPNIVPLTKPSIASPTQIPHLFCIAK) are cytoplasmic.

It localises to the membrane. This is an uncharacterized protein from Dictyostelium discoideum (Social amoeba).